A 563-amino-acid polypeptide reads, in one-letter code: (R)-mandelonitrile lyase 2 (563 aa).

The signal sequence occupies residues 1 to 27 (MEKSTMSAILLVLYIFVLHLQYSEVHS). FAD is bound by residues 63-64 (TS), 82-83 (ER), valine 129, threonine 133, and 137-140 (NAGV). Residues asparagine 145 and asparagine 162 are each glycosylated (N-linked (GlcNAc...) asparagine). Valine 244 contributes to the FAD binding site. Residue cysteine 355 coordinates substrate. N-linked (GlcNAc...) asparagine glycans are attached at residues asparagine 379 and asparagine 419. Cysteine 426 and cysteine 477 are oxidised to a cystine. Tyrosine 484 is a binding site for substrate. FAD is bound by residues 485-486 (WH) and glycine 514. Residue histidine 486 is the Proton donor of the active site. The Proton acceptor role is filled by histidine 524. 525–526 (PQ) serves as a coordination point for FAD.

Belongs to the GMC oxidoreductase family. Monomer. It depends on FAD as a cofactor. In terms of processing, glycosylated. Deglycosylation does not affect the enzymatic activity.

The catalysed reaction is (R)-mandelonitrile = benzaldehyde + hydrogen cyanide. In terms of biological role, involved in cyanogenesis, the release of HCN from injured tissues. Catalyzes the stereospecific addition of HCN to a variety of aldehydes in vitro. Has no oxidase activity. The redox properties of the FAD cofactor appear to be unimportant for catalysis. This Prunus dulcis (Almond) protein is (R)-mandelonitrile lyase 2 (MDL2).